The primary structure comprises 1067 residues: Kinesin-like protein KIF11-A (1067 aa).

The 342-residue stretch at 18–359 folds into the Kinesin motor domain; sequence NIQVVVRCRP…LDYASRAKNI (342 aa). 105–112 serves as a coordination point for ATP; the sequence is GQTGTGKT. Coiled coils occupy residues 365 to 480, 692 to 721, and 882 to 915; these read VNQK…QEAF, DSSS…HSEG, and QAQE…QVQS. Thr-937 carries the phosphothreonine; by CDK1 modification. A Phosphoserine; by NEK6 modification is found at Ser-1046.

It belongs to the TRAFAC class myosin-kinesin ATPase superfamily. Kinesin family. BimC subfamily. Heterotetramer of two heavy and two light chains. Interacts with aurka. Post-translationally, phosphorylation of Thr-937 during mitosis controls the association of this protein with the spindle apparatus. In terms of processing, a subset of this protein primarily localized at the spindle pole is phosphorylated by NEK6 during mitosis. Phosphorylated on a serine residue by aurka. In terms of tissue distribution, highly expressed in unfertilized eggs, especially in the germinal vesicle and in the radial yolk-poor channels. Also present in testis.

The protein resides in the cytoplasm. It is found in the cytoskeleton. It localises to the spindle pole. Plus end-directed motor protein required for establishing a bipolar spindle. Associates with both interphase and spindle microtubules. May be involved in nuclear divisions taking place during the development of unfertilized eggs. Required in non-mitotic cells for transport of secretory proteins from the Golgi complex to the cell surface. The protein is Kinesin-like protein KIF11-A (kif11-a) of Xenopus laevis (African clawed frog).